The chain runs to 235 residues: NAD-dependent protein deacylase (235 aa).

In terms of domain architecture, Deacetylase sirtuin-type spans 1–235 (MDLRLFKNIV…VPRFITQFLE (235 aa)). 14-33 (GAGISAESGIRTFRDQDGLW) provides a ligand contact to NAD(+). Residues tyrosine 58 and arginine 61 each coordinate substrate. 95–98 (QNVD) serves as a coordination point for NAD(+). Residue histidine 113 is the Proton acceptor of the active site. Zn(2+)-binding residues include cysteine 121, cysteine 124, cysteine 140, and cysteine 143. NAD(+)-binding positions include 180–182 (GTS), 204–206 (NLK), and alanine 222.

The protein belongs to the sirtuin family. Class III subfamily. The cofactor is Zn(2+).

It localises to the cytoplasm. The enzyme catalyses N(6)-acetyl-L-lysyl-[protein] + NAD(+) + H2O = 2''-O-acetyl-ADP-D-ribose + nicotinamide + L-lysyl-[protein]. The catalysed reaction is N(6)-succinyl-L-lysyl-[protein] + NAD(+) + H2O = 2''-O-succinyl-ADP-D-ribose + nicotinamide + L-lysyl-[protein]. NAD-dependent lysine deacetylase and desuccinylase that specifically removes acetyl and succinyl groups on target proteins. Modulates the activities of several proteins which are inactive in their acylated form. This is NAD-dependent protein deacylase from Bdellovibrio bacteriovorus (strain ATCC 15356 / DSM 50701 / NCIMB 9529 / HD100).